Reading from the N-terminus, the 139-residue chain is Gas vesicle protein A (139 aa).

The tract at residues E113–R139 is disordered. Residues A129–R139 are compositionally biased toward basic residues.

It belongs to the gas vesicle GvpA family. As to quaternary structure, the gas vesicle shell is 2 nm thick and consists of a single layer of this protein. It forms helical ribs nearly perpendicular to the long axis of the vesicle.

It is found in the gas vesicle shell. Functionally, gas vesicles are hollow, gas filled proteinaceous nanostructures found in some microorganisms. During planktonic growth they allow positioning of the organism at a favorable depth for light or nutrient acquisition. GvpA forms the protein shell. The protein is Gas vesicle protein A of Mycobacterium sp. (strain JLS).